We begin with the raw amino-acid sequence, 438 residues long: Glutaryl-CoA dehydrogenase, mitochondrial (438 aa).

A mitochondrion-targeting transit peptide spans 1-44; the sequence is MALRGVSVQLLSRVPGLRVFRTWVSSAAQTEKVGRTQSQLAKSS. Substrate contacts are provided by residues 138-139 and serine 186; that span reads RS. Residues 177 to 186, serine 186, and 212 to 214 each bind FAD; these read FGLTEPNSGS and WIT. Lysine 240 is subject to N6-acetyllysine. 287–294 is a binding site for substrate; that stretch reads FGCLNNGR. FAD contacts are provided by residues arginine 319, glutamine 330, and 387–391; that span reads DMLGG. Glutamate 414 serves as the catalytic Proton acceptor. Glycine 415 contributes to the substrate binding site. FAD-binding positions include threonine 416, 416-418, and phenylalanine 434; that span reads THD.

It belongs to the acyl-CoA dehydrogenase family. As to quaternary structure, homotetramer. Requires FAD as cofactor.

The protein localises to the mitochondrion matrix. It catalyses the reaction glutaryl-CoA + oxidized [electron-transfer flavoprotein] + 2 H(+) = (2E)-butenoyl-CoA + reduced [electron-transfer flavoprotein] + CO2. It functions in the pathway amino-acid metabolism; lysine degradation. Its pathway is amino-acid metabolism; tryptophan metabolism. In terms of biological role, catalyzes the oxidative decarboxylation of glutaryl-CoA to crotonyl-CoA and CO(2) in the degradative pathway of L-lysine, L-hydroxylysine, and L-tryptophan metabolism. It uses electron transfer flavoprotein as its electron acceptor. This is Glutaryl-CoA dehydrogenase, mitochondrial (GCDH) from Macaca fascicularis (Crab-eating macaque).